We begin with the raw amino-acid sequence, 264 residues long: Thymidylate synthase (264 aa).

Arginine 21 contributes to the dUMP binding site. Position 51 (histidine 51) interacts with (6R)-5,10-methylene-5,6,7,8-tetrahydrofolate. 126-127 (RR) serves as a coordination point for dUMP. Catalysis depends on cysteine 146, which acts as the Nucleophile. DUMP-binding positions include 166–169 (RSCD), asparagine 177, and 207–209 (HLY). Residue aspartate 169 coordinates (6R)-5,10-methylene-5,6,7,8-tetrahydrofolate. Alanine 263 serves as a coordination point for (6R)-5,10-methylene-5,6,7,8-tetrahydrofolate.

The protein belongs to the thymidylate synthase family. Bacterial-type ThyA subfamily. Homodimer.

The protein resides in the cytoplasm. It catalyses the reaction dUMP + (6R)-5,10-methylene-5,6,7,8-tetrahydrofolate = 7,8-dihydrofolate + dTMP. It functions in the pathway pyrimidine metabolism; dTTP biosynthesis. In terms of biological role, catalyzes the reductive methylation of 2'-deoxyuridine-5'-monophosphate (dUMP) to 2'-deoxythymidine-5'-monophosphate (dTMP) while utilizing 5,10-methylenetetrahydrofolate (mTHF) as the methyl donor and reductant in the reaction, yielding dihydrofolate (DHF) as a by-product. This enzymatic reaction provides an intracellular de novo source of dTMP, an essential precursor for DNA biosynthesis. The chain is Thymidylate synthase from Pectobacterium carotovorum subsp. carotovorum (strain PC1).